The following is a 269-amino-acid chain: Formamidopyrimidine-DNA glycosylase (269 aa).

Pro2 functions as the Schiff-base intermediate with DNA in the catalytic mechanism. Glu3 functions as the Proton donor in the catalytic mechanism. Lys57 functions as the Proton donor; for beta-elimination activity in the catalytic mechanism. DNA-binding residues include His90, Arg109, and Lys150. The segment at Gln235–Lys269 adopts an FPG-type zinc-finger fold. Arg259 serves as the catalytic Proton donor; for delta-elimination activity.

The protein belongs to the FPG family. In terms of assembly, monomer. It depends on Zn(2+) as a cofactor.

The enzyme catalyses Hydrolysis of DNA containing ring-opened 7-methylguanine residues, releasing 2,6-diamino-4-hydroxy-5-(N-methyl)formamidopyrimidine.. It carries out the reaction 2'-deoxyribonucleotide-(2'-deoxyribose 5'-phosphate)-2'-deoxyribonucleotide-DNA = a 3'-end 2'-deoxyribonucleotide-(2,3-dehydro-2,3-deoxyribose 5'-phosphate)-DNA + a 5'-end 5'-phospho-2'-deoxyribonucleoside-DNA + H(+). In terms of biological role, involved in base excision repair of DNA damaged by oxidation or by mutagenic agents. Acts as a DNA glycosylase that recognizes and removes damaged bases. Has a preference for oxidized purines, such as 7,8-dihydro-8-oxoguanine (8-oxoG). Has AP (apurinic/apyrimidinic) lyase activity and introduces nicks in the DNA strand. Cleaves the DNA backbone by beta-delta elimination to generate a single-strand break at the site of the removed base with both 3'- and 5'-phosphates. This chain is Formamidopyrimidine-DNA glycosylase, found in Escherichia coli O6:K15:H31 (strain 536 / UPEC).